Consider the following 139-residue polypeptide: Actin-depolymerizing factor 6 (139 aa).

Residues 5 to 139 (ASGMAVGDEC…SMDIVKARAL (135 aa)) form the ADF-H domain.

The protein belongs to the actin-binding proteins ADF family.

Actin-depolymerizing protein. Severs actin filaments (F-actin) and binds to actin monomers. The polypeptide is Actin-depolymerizing factor 6 (ADF6) (Oryza sativa subsp. japonica (Rice)).